The primary structure comprises 244 residues: Ribonuclease 3 (244 aa).

Residues 7–134 enclose the RNase III domain; that stretch reads FEEVEKTLNI…IIAAIYIDSG (128 aa). Glutamate 47 contacts Mg(2+). Aspartate 51 is an active-site residue. The Mg(2+) site is built by asparagine 120 and glutamate 123. Glutamate 123 is an active-site residue. In terms of domain architecture, DRBM spans 161 to 230; the sequence is DYKTNLQEIV…AQDALKKLKS (70 aa).

It belongs to the ribonuclease III family. As to quaternary structure, homodimer. Mg(2+) is required as a cofactor.

The protein resides in the cytoplasm. The enzyme catalyses Endonucleolytic cleavage to 5'-phosphomonoester.. Digests double-stranded RNA. Involved in the processing of primary rRNA transcript to yield the immediate precursors to the large and small rRNAs (23S and 16S). Processes some mRNAs, and tRNAs when they are encoded in the rRNA operon. Processes pre-crRNA and tracrRNA of type II CRISPR loci if present in the organism. The chain is Ribonuclease 3 from Clostridium kluyveri (strain NBRC 12016).